We begin with the raw amino-acid sequence, 312 residues long: Undecaprenyl-diphosphatase (312 aa).

The next 7 membrane-spanning stretches (helical) occupy residues 74 to 94 (GVAF…WYFW), 122 to 142 (VSIG…KVFI), 154 to 174 (VAIA…ERIG), 183 to 203 (LDIR…IPGV), 226 to 246 (FSFL…LKTL), 254 to 274 (VGLV…YIAI), and 288 to 308 (IFIW…ISGV).

It belongs to the UppP family.

It localises to the cell inner membrane. The enzyme catalyses di-trans,octa-cis-undecaprenyl diphosphate + H2O = di-trans,octa-cis-undecaprenyl phosphate + phosphate + H(+). Functionally, catalyzes the dephosphorylation of undecaprenyl diphosphate (UPP). Confers resistance to bacitracin. The chain is Undecaprenyl-diphosphatase from Trichodesmium erythraeum (strain IMS101).